The following is a 100-amino-acid chain: MKPEKKRILTTGEIDNSCFNKKSGGARTTVNGSPTDEKAFKVVSTLAGCQRLLRISHILLRHVEVDTRTYFLFSTLVAAGGRTLPSGGRGQGSKLTGEAI.

This is an uncharacterized protein from Lactuca sativa (Garden lettuce).